The chain runs to 228 residues: Carbonic anhydrase (228 aa).

The Zn(2+) site is built by Cys-56, Asp-58, His-112, and Cys-115.

The protein belongs to the beta-class carbonic anhydrase family. Zn(2+) serves as cofactor.

It catalyses the reaction hydrogencarbonate + H(+) = CO2 + H2O. Its function is as follows. Catalyzes the reversible hydration of CO(2) to H(2)CO(3). The main role may be to provide inorganic carbon for the bicarbonate-dependent carboxylation reactions catalyzed by pyruvate carboxylase, acetyl-CoA carboxylase and carbamoyl-phosphate synthetase. Involved in osmoadaptation. In Emericella nidulans (strain FGSC A4 / ATCC 38163 / CBS 112.46 / NRRL 194 / M139) (Aspergillus nidulans), this protein is Carbonic anhydrase.